A 137-amino-acid polypeptide reads, in one-letter code: Bacteriohemerythrin (137 aa).

Residues His21, His53, Glu57, His72, His76, His112, and Asp117 each contribute to the Fe cation site.

Belongs to the hemerythrin family. As to quaternary structure, monomer.

Oxygen-binding protein. May be involved in a storage mechanism or for delivery to oxygen-requiring enzymes. The oxygen-binding site contains two iron atoms. The protein is Bacteriohemerythrin of Ralstonia nicotianae (strain ATCC BAA-1114 / GMI1000) (Ralstonia solanacearum).